We begin with the raw amino-acid sequence, 269 residues long: MPDTASDDALVLYGQRFASRLLLGTARYPSPSVLEAAVRRARPAMVTASLRRQGSNPAEAGSGFWELLRRLDVPVLPNTAGCHSIQEAVTTAQMAREVFGTPWIKLELIGDDYTLQPDTLNLVEAASQLVRDGFHVLPYCTEDLVLCQRLVDVGCQAVMPWAAPIGTGRGPVNPYALRTLRERLDVPLLVDAGLGLPSHACQVMEWGYDGVLLNTAVALAQDPVAMAGAFADAVQAGRTARQAGAMSAQDAAQPSTPVLGTPFWHHDHG.

Residue Lys105 is the Schiff-base intermediate with DXP of the active site. Residues Gly166, 192-193 (AG), and 214-215 (NT) contribute to the 1-deoxy-D-xylulose 5-phosphate site. Residues 245-269 (AMSAQDAAQPSTPVLGTPFWHHDHG) form a disordered region.

This sequence belongs to the ThiG family. As to quaternary structure, homotetramer. Forms heterodimers with either ThiH or ThiS.

Its subcellular location is the cytoplasm. The enzyme catalyses [ThiS sulfur-carrier protein]-C-terminal-Gly-aminoethanethioate + 2-iminoacetate + 1-deoxy-D-xylulose 5-phosphate = [ThiS sulfur-carrier protein]-C-terminal Gly-Gly + 2-[(2R,5Z)-2-carboxy-4-methylthiazol-5(2H)-ylidene]ethyl phosphate + 2 H2O + H(+). It participates in cofactor biosynthesis; thiamine diphosphate biosynthesis. In terms of biological role, catalyzes the rearrangement of 1-deoxy-D-xylulose 5-phosphate (DXP) to produce the thiazole phosphate moiety of thiamine. Sulfur is provided by the thiocarboxylate moiety of the carrier protein ThiS. In vitro, sulfur can be provided by H(2)S. This chain is Thiazole synthase, found in Paracidovorax citrulli (strain AAC00-1) (Acidovorax citrulli).